Here is a 560-residue protein sequence, read N- to C-terminus: Nucleoprotein (560 aa).

The binding site for the cap structure m7GTP stretch occupies residues 53 to 236 (MRKDKRTDTD…ITQEQSQINV (184 aa)). A disordered region spans residues 333 to 353 (LTDTGSPNHPPVRNGGSPRLS). Mn(2+)-binding residues include D379 and E381. Positions 389, 496, 499, and 520 each coordinate Zn(2+). Mn(2+) is bound at residue D524.

It belongs to the arenaviridae nucleocapsid protein family. In terms of assembly, homomultimerizes to form the nucleocapsid. Binds to viral genomic RNA. Interacts with glycoprotein G2. Interacts with protein Z; this interaction probably directs the encapsidated genome to budding sites. Interacts with protein L; this interaction does not interfere with Z-L interaction. Interacts with host IKBKE (via Protein kinase domain); the interaction inhibits IKBKE kinase activity.

The protein resides in the virion. It localises to the host cytoplasm. Encapsidates the genome, protecting it from nucleases. The encapsidated genomic RNA is termed the nucleocapsid (NC). Serves as template for viral transcription and replication. The increased presence of protein N in host cell does not seem to trigger the switch from transcription to replication as observed in other negative strain RNA viruses. Through the interaction with host IKBKE, strongly inhibits the phosphorylation and nuclear translocation of host IRF3, a protein involved in interferon activation pathway, leading to the inhibition of interferon-beta and IRF3-dependent promoters activation. Also encodes a functional 3'-5' exoribonuclease that degrades preferentially dsRNA substrates and thereby participates in the suppression of interferon induction. This Pirital mammarenavirus (isolate Rat/Venezuela/VAV-488/1995) (PIRV) protein is Nucleoprotein.